The primary structure comprises 411 residues: 3-phosphoshikimate 1-carboxyvinyltransferase (411 aa).

3 residues coordinate 3-phosphoshikimate: Lys-20, Ser-21, and Arg-25. Residue Lys-20 coordinates phosphoenolpyruvate. 2 residues coordinate phosphoenolpyruvate: Gly-86 and Arg-114. 3-phosphoshikimate contacts are provided by Ser-156, Ser-157, Gln-158, Ser-181, Asp-295, and Lys-322. Gln-158 is a phosphoenolpyruvate binding site. The active-site Proton acceptor is Asp-295. The phosphoenolpyruvate site is built by Arg-326, Arg-367, and Lys-393.

It belongs to the EPSP synthase family. As to quaternary structure, monomer.

The protein resides in the cytoplasm. It carries out the reaction 3-phosphoshikimate + phosphoenolpyruvate = 5-O-(1-carboxyvinyl)-3-phosphoshikimate + phosphate. The protein operates within metabolic intermediate biosynthesis; chorismate biosynthesis. In terms of biological role, catalyzes the transfer of the enolpyruvyl moiety of phosphoenolpyruvate (PEP) to the 5-hydroxyl of shikimate-3-phosphate (S3P) to produce enolpyruvyl shikimate-3-phosphate and inorganic phosphate. The polypeptide is 3-phosphoshikimate 1-carboxyvinyltransferase (Picrophilus torridus (strain ATCC 700027 / DSM 9790 / JCM 10055 / NBRC 100828 / KAW 2/3)).